The following is a 378-amino-acid chain: UPF0754 membrane protein BCE33L0760 (378 aa).

The next 2 helical transmembrane spans lie at 1–21 (MNIW…GGFT) and 357–377 (YLGA…LLFL).

Belongs to the UPF0754 family.

The protein resides in the cell membrane. The protein is UPF0754 membrane protein BCE33L0760 of Bacillus cereus (strain ZK / E33L).